The primary structure comprises 242 residues: ATP synthase subunit b 2 (242 aa).

A helical membrane pass occupies residues 4–24 (LLAISSLTLLASLVLLVVSPA). The disordered stretch occupies residues 43–74 (ADSEDGDHDHDHEGDDHGHDEAAGDEHGHGDG). Basic and acidic residues predominate over residues 49 to 74 (DHDHDHEGDDHGHDEAAGDEHGHGDG).

Belongs to the ATPase B chain family. As to quaternary structure, F-type ATPases have 2 components, F(1) - the catalytic core - and F(0) - the membrane proton channel. F(1) has five subunits: alpha(3), beta(3), gamma(1), delta(1), epsilon(1). F(0) has three main subunits: a(1), b(2) and c(10-14). The alpha and beta chains form an alternating ring which encloses part of the gamma chain. F(1) is attached to F(0) by a central stalk formed by the gamma and epsilon chains, while a peripheral stalk is formed by the delta and b chains.

Its subcellular location is the cell inner membrane. In terms of biological role, f(1)F(0) ATP synthase produces ATP from ADP in the presence of a proton or sodium gradient. F-type ATPases consist of two structural domains, F(1) containing the extramembraneous catalytic core and F(0) containing the membrane proton channel, linked together by a central stalk and a peripheral stalk. During catalysis, ATP synthesis in the catalytic domain of F(1) is coupled via a rotary mechanism of the central stalk subunits to proton translocation. Its function is as follows. Component of the F(0) channel, it forms part of the peripheral stalk, linking F(1) to F(0). The polypeptide is ATP synthase subunit b 2 (Rhodopirellula baltica (strain DSM 10527 / NCIMB 13988 / SH1)).